Consider the following 344-residue polypeptide: N-acetyl-gamma-glutamyl-phosphate reductase (344 aa).

Cys148 is an active-site residue.

Belongs to the NAGSA dehydrogenase family. Type 1 subfamily.

Its subcellular location is the cytoplasm. The enzyme catalyses N-acetyl-L-glutamate 5-semialdehyde + phosphate + NADP(+) = N-acetyl-L-glutamyl 5-phosphate + NADPH + H(+). It participates in amino-acid biosynthesis; L-arginine biosynthesis; N(2)-acetyl-L-ornithine from L-glutamate: step 3/4. Its function is as follows. Catalyzes the NADPH-dependent reduction of N-acetyl-5-glutamyl phosphate to yield N-acetyl-L-glutamate 5-semialdehyde. The sequence is that of N-acetyl-gamma-glutamyl-phosphate reductase from Clostridium botulinum (strain Eklund 17B / Type B).